Here is a 338-residue protein sequence, read N- to C-terminus: Galactinol synthase 2 (338 aa).

The active site involves Lys-105. The Mn(2+) site is built by Asp-121, Asp-123, and His-258.

This sequence belongs to the glycosyltransferase 8 family. Galactosyltransferase subfamily. Requires a divalent metal cation as cofactor.

Its subcellular location is the cytoplasm. The catalysed reaction is myo-inositol + UDP-alpha-D-galactose = alpha-D-galactosyl-(1-&gt;3)-1D-myo-inositol + UDP + H(+). Its function is as follows. Galactinol synthase involved in the biosynthesis of raffinose family oligosaccharides (RFOs) that function as osmoprotectants. May promote plant stress tolerance. The polypeptide is Galactinol synthase 2 (GOLS2) (Solanum lycopersicum (Tomato)).